The chain runs to 282 residues: DegV domain-containing protein SPy_0865/M5005_Spy0672 (282 aa).

Positions 3–280 (LAVITDSTAT…EGAIAFGVTP (278 aa)) constitute a DegV domain. Hexadecanoate contacts are provided by T61 and S94.

In terms of biological role, may bind long-chain fatty acids, such as palmitate, and may play a role in lipid transport or fatty acid metabolism. The sequence is that of DegV domain-containing protein SPy_0865/M5005_Spy0672 from Streptococcus pyogenes serotype M1.